The sequence spans 751 residues: Photosystem I P700 chlorophyll a apoprotein A1 (751 aa).

Helical transmembrane passes span 71-94, 157-180, 196-220, 292-310, 347-370, 386-412, 434-456, and 532-550; these read VFSAHFGQLAIIFTWLSGMYFHGA, LYCTAIGALIFAALMLFAGWFHYH, LNHHLAGLLGLGSLSWAGHQIHVSL, TAHHHLAIAVLFLIAGHMY, WHAQLALNLAMLGSLTIIVAHHMY, LSLFTHHMWIGGFIIVGAAAHAAIFLV, AIISHLNWVCIFLGFHSFGLYIH, and FLVHHIHAFTIHVTVLILL. [4Fe-4S] cluster is bound by residues C574 and C583. 2 consecutive transmembrane segments (helical) span residues 590 to 611 and 665 to 687; these read HVFLGLFWMYNAISVVIFHFSW and LSAYGLFFLGAHFVWAFSLMFLF. H676 provides a ligand contact to chlorophyll a'. Residues M684 and Y692 each coordinate chlorophyll a. Position 693 (W693) interacts with phylloquinone. A helical membrane pass occupies residues 725 to 745; sequence AVGVAHYLLGGIVTTWAFFLA.

Belongs to the PsaA/PsaB family. In terms of assembly, the PsaA/B heterodimer binds the P700 chlorophyll special pair and subsequent electron acceptors. PSI consists of a core antenna complex that captures photons, and an electron transfer chain that converts photonic excitation into a charge separation. The eukaryotic PSI reaction center is composed of at least 11 subunits. The cofactor is P700 is a chlorophyll a/chlorophyll a' dimer, A0 is one or more chlorophyll a, A1 is one or both phylloquinones and FX is a shared 4Fe-4S iron-sulfur center..

The protein resides in the plastid. Its subcellular location is the chloroplast thylakoid membrane. The enzyme catalyses reduced [plastocyanin] + hnu + oxidized [2Fe-2S]-[ferredoxin] = oxidized [plastocyanin] + reduced [2Fe-2S]-[ferredoxin]. PsaA and PsaB bind P700, the primary electron donor of photosystem I (PSI), as well as the electron acceptors A0, A1 and FX. PSI is a plastocyanin-ferredoxin oxidoreductase, converting photonic excitation into a charge separation, which transfers an electron from the donor P700 chlorophyll pair to the spectroscopically characterized acceptors A0, A1, FX, FA and FB in turn. Oxidized P700 is reduced on the lumenal side of the thylakoid membrane by plastocyanin. This Welwitschia mirabilis (Tree tumbo) protein is Photosystem I P700 chlorophyll a apoprotein A1.